Here is a 228-residue protein sequence, read N- to C-terminus: LexA repressor (228 aa).

A DNA-binding region (H-T-H motif) is located at residues 26-46 (FDEMKEALDLRSKSGIHRLIT). Catalysis depends on for autocatalytic cleavage activity residues Ser149 and Lys187.

Belongs to the peptidase S24 family. Homodimer.

It catalyses the reaction Hydrolysis of Ala-|-Gly bond in repressor LexA.. In terms of biological role, represses a number of genes involved in the response to DNA damage (SOS response), including recA and lexA. In the presence of single-stranded DNA, RecA interacts with LexA causing an autocatalytic cleavage which disrupts the DNA-binding part of LexA, leading to derepression of the SOS regulon and eventually DNA repair. In Jannaschia sp. (strain CCS1), this protein is LexA repressor.